The chain runs to 159 residues: Ribosome maturation factor RimP (159 aa).

This sequence belongs to the RimP family.

It is found in the cytoplasm. Required for maturation of 30S ribosomal subunits. The polypeptide is Ribosome maturation factor RimP (Streptococcus agalactiae serotype III (strain NEM316)).